A 101-amino-acid chain; its full sequence is A-type ATP synthase subunit F (101 aa).

The protein belongs to the V-ATPase F subunit family. Has multiple subunits with at least A(3), B(3), C, D, E, F, H, I and proteolipid K(x).

The protein resides in the cell membrane. Its function is as follows. Component of the A-type ATP synthase that produces ATP from ADP in the presence of a proton gradient across the membrane. The sequence is that of A-type ATP synthase subunit F from Methanosarcina acetivorans (strain ATCC 35395 / DSM 2834 / JCM 12185 / C2A).